The chain runs to 201 residues: Ribonuclease HII (201 aa).

The RNase H type-2 domain maps to Ala-15–Pro-201. Residues Asp-21, Glu-22, and Asp-113 each contribute to the a divalent metal cation site.

It belongs to the RNase HII family. Requires Mn(2+) as cofactor. It depends on Mg(2+) as a cofactor.

The protein localises to the cytoplasm. The catalysed reaction is Endonucleolytic cleavage to 5'-phosphomonoester.. Its function is as follows. Endonuclease that specifically degrades the RNA of RNA-DNA hybrids. This chain is Ribonuclease HII, found in Bordetella pertussis (strain Tohama I / ATCC BAA-589 / NCTC 13251).